Reading from the N-terminus, the 308-residue chain is Microtubule integrity protein mal3 (308 aa).

The 102-residue stretch at 2-103 folds into the Calponin-homology (CH) domain; it reads SESRQELLAW…FVQWAKRFWD (102 aa). Residues 117–162 form a disordered region; the sequence is RGNRGPANTRVMNSSAGATGPSRRRQVSSGSSTPSMTKSSANNNNV. Residues 144-162 are compositionally biased toward low complexity; the sequence is SSGSSTPSMTKSSANNNNV. One can recognise an EB1 C-terminal domain in the interval 173–247; the sequence is RAKQAQQQIT…LYSTEDGFEL (75 aa).

The protein belongs to the MAPRE family. As to quaternary structure, interacts with tea2.

The protein localises to the cytoplasm. The protein resides in the cytoskeleton. Its function is as follows. May play a role in regulating the integrity of microtubules possibly by influencing their stability. Involved in an anchoring mechanism to maintain tea2 and tip1 at growing microtubule ends. Strongly stimulates the ATPase activity of tea2. This chain is Microtubule integrity protein mal3 (mal3), found in Schizosaccharomyces pombe (strain 972 / ATCC 24843) (Fission yeast).